The following is a 255-amino-acid chain: Ribosomal RNA small subunit methyltransferase G (255 aa).

S-adenosyl-L-methionine-binding positions include glycine 89, phenylalanine 94, 112–114, 140–141, and arginine 159; these read DST and VE.

The protein belongs to the methyltransferase superfamily. RNA methyltransferase RsmG family.

Its subcellular location is the cytoplasm. In terms of biological role, specifically methylates the N7 position of a guanine in 16S rRNA. This is Ribosomal RNA small subunit methyltransferase G from Trichodesmium erythraeum (strain IMS101).